Consider the following 476-residue polypeptide: Protein PAL OF QUIRKY (476 aa).

An N-terminal signal peptide occupies residues 1–14 (MTTVSSAFATVAEG). The interval 204–256 (TRRTNSGTSGSGDGNGGICGQESMMLETNSSFGSTSSSVSSSNLPPIKSSGED) is disordered. The segment covering 212-222 (SGSGDGNGGIC) has biased composition (gly residues). A compositionally biased stretch (low complexity) spans 233–252 (SSFGSTSSSVSSSNLPPIKS).

Homodimer. Interacts with QKY and SUB/SCM at the plasma membrane. As to expression, observed in seedlings, roots, shoots, leaves, stems, inflorescence and flowers.

Its subcellular location is the cell membrane. It localises to the endomembrane system. Its function is as follows. Collaboratively with SUB and QKY, regulates cell growth anisotropy during gynoecium development, thus linking together cell-cell communication and cellular growth. The chain is Protein PAL OF QUIRKY from Arabidopsis thaliana (Mouse-ear cress).